Here is a 125-residue protein sequence, read N- to C-terminus: Large ribosomal subunit protein bL19 (125 aa).

This sequence belongs to the bacterial ribosomal protein bL19 family.

This protein is located at the 30S-50S ribosomal subunit interface and may play a role in the structure and function of the aminoacyl-tRNA binding site. The chain is Large ribosomal subunit protein bL19 from Ehrlichia ruminantium (strain Gardel).